The chain runs to 205 residues: Probable peptidyl-tRNA hydrolase 2 (205 aa).

Residues 40 to 49 (YSSKNANKAS) show a composition bias toward polar residues. The tract at residues 40–68 (YSSKNANKASNPEKESPVSVSNDEDSESE) is disordered. S65 and S79 each carry phosphoserine.

The protein belongs to the PTH2 family.

The enzyme catalyses an N-acyl-L-alpha-aminoacyl-tRNA + H2O = an N-acyl-L-amino acid + a tRNA + H(+). Functionally, the natural substrate for this enzyme may be peptidyl-tRNAs which drop off the ribosome during protein synthesis. The protein is Probable peptidyl-tRNA hydrolase 2 of Schizosaccharomyces pombe (strain 972 / ATCC 24843) (Fission yeast).